The sequence spans 160 residues: Anaerobic nitrite reductase AHB1 (160 aa).

The Globin domain occupies 8-157 (VFTEEQEALV…LVAAIKAEMN (150 aa)). A Homodimerization motif is present at residues 41–45 (EIAPT). Heme b contacts are provided by S51, K65, H69, R99, S103, and H104. A Homodimerization motif is present at residues 111-123 (DEHFEVAKYALLE).

Belongs to the plant globin family. Homodimer. Heme b serves as cofactor. In terms of tissue distribution, expressed in roots and rosette leaves.

The protein resides in the cytoplasm. The protein localises to the nucleus. It carries out the reaction Fe(III)-heme b-[protein] + nitric oxide + H2O = Fe(II)-heme b-[protein] + nitrite + 2 H(+). In terms of biological role, phytoglobin that reduces nitrite to nitric oxide (NO) under anoxic conditions (e.g. during flooding or in waterlogged soil). May not function as an oxygen storage or transport protein. Has an unusually high affinity for O(2) through an hexacoordinate heme iron because of a very low dissociation constant. The protein is Anaerobic nitrite reductase AHB1 of Arabidopsis thaliana (Mouse-ear cress).